Here is a 330-residue protein sequence, read N- to C-terminus: 4,5-dihydroxyphthalate decarboxylase (330 aa).

The protein to P.putida DHP decarboxylase.

The enzyme catalyses 4,5-dihydroxyphthalate + H(+) = 3,4-dihydroxybenzoate + CO2. The protein operates within xenobiotic degradation; phthalate degradation; 3,4-dihydroxybenzoate from phthalate: step 3/3. The chain is 4,5-dihydroxyphthalate decarboxylase (phtD) from Comamonas testosteroni (Pseudomonas testosteroni).